The sequence spans 425 residues: L-cysteine:1D-myo-inositol 2-amino-2-deoxy-alpha-D-glucopyranoside ligase (425 aa).

Cys43 is a Zn(2+) binding site. L-cysteinyl-5'-AMP-binding positions include Cys43–Thr46, Ser58, and Asn81–Thr83. Residues Ile45–His55 carry the 'HIGH' region motif. The 'ERGGDP' region signature appears at Glu199 to Pro204. Trp240 is an L-cysteinyl-5'-AMP binding site. A Zn(2+)-binding site is contributed by Cys244. L-cysteinyl-5'-AMP is bound at residue Gly262 to Asp264. His269 lines the Zn(2+) pocket. Val295 contacts L-cysteinyl-5'-AMP. The 'KMSKS' region motif lies at Lys301–Ser305.

This sequence belongs to the class-I aminoacyl-tRNA synthetase family. MshC subfamily. Monomer. Zn(2+) serves as cofactor.

The catalysed reaction is 1D-myo-inositol 2-amino-2-deoxy-alpha-D-glucopyranoside + L-cysteine + ATP = 1D-myo-inositol 2-(L-cysteinylamino)-2-deoxy-alpha-D-glucopyranoside + AMP + diphosphate + H(+). Catalyzes the ATP-dependent condensation of GlcN-Ins and L-cysteine to form L-Cys-GlcN-Ins. The sequence is that of L-cysteine:1D-myo-inositol 2-amino-2-deoxy-alpha-D-glucopyranoside ligase from Paenarthrobacter aurescens (strain TC1).